The following is a 264-amino-acid chain: S-adenosylmethionine decarboxylase proenzyme (264 aa).

Ser-112 (schiff-base intermediate with substrate; via pyruvic acid) is an active-site residue. Ser-112 is modified (pyruvic acid (Ser); by autocatalysis). His-117 functions as the Proton acceptor; for processing activity in the catalytic mechanism. The Proton donor; for catalytic activity role is filled by Cys-140.

The protein belongs to the prokaryotic AdoMetDC family. Type 2 subfamily. In terms of assembly, heterooctamer of four alpha and four beta chains arranged as a tetramer of alpha/beta heterodimers. The cofactor is pyruvate. Is synthesized initially as an inactive proenzyme. Formation of the active enzyme involves a self-maturation process in which the active site pyruvoyl group is generated from an internal serine residue via an autocatalytic post-translational modification. Two non-identical subunits are generated from the proenzyme in this reaction, and the pyruvate is formed at the N-terminus of the alpha chain, which is derived from the carboxyl end of the proenzyme. The post-translation cleavage follows an unusual pathway, termed non-hydrolytic serinolysis, in which the side chain hydroxyl group of the serine supplies its oxygen atom to form the C-terminus of the beta chain, while the remainder of the serine residue undergoes an oxidative deamination to produce ammonia and the pyruvoyl group blocking the N-terminus of the alpha chain.

It catalyses the reaction S-adenosyl-L-methionine + H(+) = S-adenosyl 3-(methylsulfanyl)propylamine + CO2. It functions in the pathway amine and polyamine biosynthesis; S-adenosylmethioninamine biosynthesis; S-adenosylmethioninamine from S-adenosyl-L-methionine: step 1/1. In terms of biological role, catalyzes the decarboxylation of S-adenosylmethionine to S-adenosylmethioninamine (dcAdoMet), the propylamine donor required for the synthesis of the polyamines spermine and spermidine from the diamine putrescine. In Escherichia coli O45:K1 (strain S88 / ExPEC), this protein is S-adenosylmethionine decarboxylase proenzyme.